Consider the following 535-residue polypeptide: Transmembrane protein 151 homolog (535 aa).

A run of 3 helical transmembrane segments spans residues 27 to 47, 73 to 93, and 254 to 274; these read GYGKCLICSLLLVLCFFYATY, YNFVPIVFGLMLYIVYLMECW, and PWFLHPIVFWFFSILVLSWPL. The segment at 498–535 is disordered; sequence ASISHSSSKDLKSLTLKNNNGAANNNNNNNNENPEEQP. Residues 510–529 show a composition bias toward low complexity; that stretch reads SLTLKNNNGAANNNNNNNNE.

Belongs to the TMEM151 family.

The protein resides in the membrane. This Caenorhabditis briggsae protein is Transmembrane protein 151 homolog.